A 1038-amino-acid polypeptide reads, in one-letter code: Ribosome quality control complex subunit 2 (1038 aa).

Residues 350-383 are a coiled coil; it reads ALRIQNQESQAQKKIDDARAENDRKIQALLDVQE. Disordered regions lie at residues 459 to 499, 708 to 824, and 877 to 898; these read LNTS…MKRK, KTSG…DEPG, and QRKK…KREK. The stretch at 713–768 forms a coiled coil; sequence EDNGDDDEEEEEEEEEEEEEEEEEEEEEEEEKEEEEKEEEQQQDEDDSNEVNGLEK. Acidic residues predominate over residues 714–761; sequence DNGDDDEEEEEEEEEEEEEEEEEEEEEEEEKEEEEKEEEQQQDEDDSN. Over residues 780 to 794 the composition is skewed to basic and acidic residues; the sequence is SFEHDNLEKDIEKHC. Polar residues predominate over residues 795–805; the sequence is TISSDTDSDSG. Serine 797 carries the post-translational modification Phosphoserine. The stretch at 830-912 forms a coiled coil; it reads IENINSNVRG…QALKFTKKEK (83 aa). Basic and acidic residues predominate over residues 877–894; that stretch reads QRKKEEIMKREVREDRKN.

The protein belongs to the NEMF family. As to quaternary structure, component of the ribosome quality control complex (RQC), composed of the E3 ubiquitin ligase RKR1/LTN1, RQC1 and RQC2, as well as CDC48 and its ubiquitin-binding cofactors associated with the 60S ribosomal subunit. RQC2 binds to the 40S-binding surface of tRNAs.

The protein localises to the cytoplasm. Key component of the ribosome quality control complex (RQC), a ribosome-associated complex that mediates the extraction of incompletely synthesized nascent chains from stalled ribosomes as well as their ubiquitin-mediated proteasomal degradation. Thereby, frees 60S subunit ribosomes from the stalled translation complex and prevents the accumulation of nascent polypeptide chains that are potentially toxic for the cell. Within the RQC complex, RQC2 specifically binds stalled 60S ribosomal subunits by recognizing an exposed, nascent chain-conjugated tRNA moiety and promotes the recruitment of RKR1/LTN1 to stalled 60S subunits. Following binding to stalled 60S ribosomal subunits, RQC2 mediates CAT tailing by recruiting alanine- and threonine-charged tRNA to the A-site and directing the elongation of stalled nascent chains independently of mRNA or 40S subunits, leading to non-templated C-terminal Ala and Thr extensions (CAT tails). CAT tails promote the RKR1/LTN1-mediated ubiquitination of incompletely synthesized nascent polypeptides: CAT tailing facilitates RKR1/LTN1-dependent ubiquitination by exposing lysine residues that would otherwise remain buried in the ribosomal exit tunnel. Following ubiquitination, incompletely synthesized nascent polypeptides are recognized by CDC48 and degraded by the proteasome. CAT-tailed proteins tend to aggregate and sequester chaperones and can induce proteotoxic stress; their RKR1/LTN1-dependent ubiquitination and degradation is required to prevent proteotoxic stress. This chain is Ribosome quality control complex subunit 2, found in Saccharomyces cerevisiae (strain ATCC 204508 / S288c) (Baker's yeast).